The sequence spans 430 residues: Probable sulfoacetate transporter SauU (430 aa).

10 consecutive transmembrane segments (helical) span residues 47–67 (LGLV…LGGW), 83–103 (LIWG…ILVV), 142–162 (FARL…AAAG), 165–185 (EAFI…AFFF), 228–248 (WLVT…LTWL), 263–283 (LALF…LGGV), 301–321 (AVLF…TFTA), 327–347 (VILL…LWSL), 362–382 (MMNT…GYLI), and 390–410 (LPFM…LFIN).

Belongs to the major facilitator superfamily.

It localises to the cell membrane. May transport sulfoacetate into the cell. This chain is Probable sulfoacetate transporter SauU (sauU), found in Cupriavidus necator (strain ATCC 17699 / DSM 428 / KCTC 22496 / NCIMB 10442 / H16 / Stanier 337) (Ralstonia eutropha).